Here is a 251-residue protein sequence, read N- to C-terminus: MLNLLNTLFLNVISNDVPTPYGIYFQDSATPNQEGILELHDNIMFYLFIILGLVSWMLFTIVKTYSKNPMAYKYIKHGQTIEIIWTMFPAVILLIIAFPSFILLYLCDEVISPAMTIKAIGYQWYWKYEYSDFINDNGETIEFESYVIPDDLLEEGQLRLLDTDTSVVVPVDTHIRFVVTGADVIHDFAIPSLGIKVDANPGRLNQVSALIQREGVFYGQCSELCGVNHAAMPIKIEAVSLPKFLEWLNEQ.

The next 2 membrane-spanning stretches (helical) occupy residues 42 to 62 (NIMFYLFIILGLVSWMLFTIV) and 83 to 103 (IIWTMFPAVILLIIAFPSFIL). Residues histidine 186, cysteine 221, glutamate 223, cysteine 225, histidine 229, and methionine 232 each coordinate Cu cation. A Mg(2+)-binding site is contributed by glutamate 223.

It belongs to the cytochrome c oxidase subunit 2 family. Component of the cytochrome c oxidase (complex IV, CIV), a multisubunit enzyme composed of a catalytic core of 3 subunits and several supernumerary subunits. The complex exists as a monomer or a dimer and forms supercomplexes (SCs) in the inner mitochondrial membrane with ubiquinol-cytochrome c oxidoreductase (cytochrome b-c1 complex, complex III, CIII). Requires Cu cation as cofactor.

Its subcellular location is the mitochondrion inner membrane. The catalysed reaction is 4 Fe(II)-[cytochrome c] + O2 + 8 H(+)(in) = 4 Fe(III)-[cytochrome c] + 2 H2O + 4 H(+)(out). Its function is as follows. Component of the cytochrome c oxidase, the last enzyme in the mitochondrial electron transport chain which drives oxidative phosphorylation. The respiratory chain contains 3 multisubunit complexes succinate dehydrogenase (complex II, CII), ubiquinol-cytochrome c oxidoreductase (cytochrome b-c1 complex, complex III, CIII) and cytochrome c oxidase (complex IV, CIV), that cooperate to transfer electrons derived from NADH and succinate to molecular oxygen, creating an electrochemical gradient over the inner membrane that drives transmembrane transport and the ATP synthase. Cytochrome c oxidase is the component of the respiratory chain that catalyzes the reduction of oxygen to water. Electrons originating from reduced cytochrome c in the intermembrane space (IMS) are transferred via the dinuclear copper A center (CU(A)) of subunit 2 and heme A of subunit 1 to the active site in subunit 1, a binuclear center (BNC) formed by heme A3 and copper B (CU(B)). The BNC reduces molecular oxygen to 2 water molecules using 4 electrons from cytochrome c in the IMS and 4 protons from the mitochondrial matrix. This Candida glabrata (strain ATCC 2001 / BCRC 20586 / JCM 3761 / NBRC 0622 / NRRL Y-65 / CBS 138) (Yeast) protein is Cytochrome c oxidase subunit 2 (COX2).